The primary structure comprises 244 residues: UPF0173 metal-dependent hydrolase RoseRS_3945 (244 aa).

The protein belongs to the UPF0173 family.

The chain is UPF0173 metal-dependent hydrolase RoseRS_3945 from Roseiflexus sp. (strain RS-1).